The sequence spans 168 residues: uncharacterized protein (168 aa).

The N-acetyltransferase domain maps to 7 to 168 (ERIDTLKTGD…TAKGWPDISM (162 aa)).

This is an uncharacterized protein from Azospirillum brasilense.